We begin with the raw amino-acid sequence, 1116 residues long: DNA-directed RNA polymerase subunit beta (1116 aa).

Residues K1070–K1100 show a composition bias toward basic and acidic residues. The segment at K1070–K1116 is disordered. Residues Q1101–K1116 show a composition bias toward basic residues.

Belongs to the RNA polymerase beta chain family. In plastids the minimal PEP RNA polymerase catalytic core is composed of four subunits: alpha, beta, beta', and beta''. When a (nuclear-encoded) sigma factor is associated with the core the holoenzyme is formed, which can initiate transcription.

The protein localises to the plastid. It is found in the chloroplast. The enzyme catalyses RNA(n) + a ribonucleoside 5'-triphosphate = RNA(n+1) + diphosphate. Its function is as follows. DNA-dependent RNA polymerase catalyzes the transcription of DNA into RNA using the four ribonucleoside triphosphates as substrates. This is DNA-directed RNA polymerase subunit beta from Heterosigma akashiwo (Chromophytic alga).